The following is a 275-amino-acid chain: ADP-dependent (S)-NAD(P)H-hydrate dehydratase (275 aa).

Residues threonine 5–tyrosine 273 form the YjeF C-terminal domain. Alanine 40, glycine 103, and histidine 151 together coordinate (6S)-NADPHX. Glycine 214 serves as a coordination point for AMP. Aspartate 215 is a (6S)-NADPHX binding site.

It belongs to the NnrD/CARKD family. In terms of assembly, homotetramer. Mg(2+) serves as cofactor.

The enzyme catalyses (6S)-NADHX + ADP = AMP + phosphate + NADH + H(+). It carries out the reaction (6S)-NADPHX + ADP = AMP + phosphate + NADPH + H(+). Its function is as follows. Catalyzes the dehydration of the S-form of NAD(P)HX at the expense of ADP, which is converted to AMP. Together with NAD(P)HX epimerase, which catalyzes the epimerization of the S- and R-forms, the enzyme allows the repair of both epimers of NAD(P)HX, a damaged form of NAD(P)H that is a result of enzymatic or heat-dependent hydration. The chain is ADP-dependent (S)-NAD(P)H-hydrate dehydratase from Lactococcus lactis subsp. lactis (strain IL1403) (Streptococcus lactis).